Here is a 160-residue protein sequence, read N- to C-terminus: Large ribosomal subunit protein uL13 (160 aa).

Belongs to the universal ribosomal protein uL13 family. In terms of assembly, part of the 50S ribosomal subunit.

Its function is as follows. This protein is one of the early assembly proteins of the 50S ribosomal subunit, although it is not seen to bind rRNA by itself. It is important during the early stages of 50S assembly. The polypeptide is Large ribosomal subunit protein uL13 (Orientia tsutsugamushi (strain Boryong) (Rickettsia tsutsugamushi)).